We begin with the raw amino-acid sequence, 207 residues long: Guanylate kinase (207 aa).

The 180-residue stretch at 6 to 185 folds into the Guanylate kinase-like domain; sequence GLLIVLSGPS…AKNRIQCIVE (180 aa). 13 to 20 is a binding site for ATP; it reads GPSGVGKG.

It belongs to the guanylate kinase family.

Its subcellular location is the cytoplasm. The catalysed reaction is GMP + ATP = GDP + ADP. Functionally, essential for recycling GMP and indirectly, cGMP. In Staphylococcus aureus (strain USA300), this protein is Guanylate kinase.